Here is a 527-residue protein sequence, read N- to C-terminus: Zinc finger C2HC domain-containing protein 1C (527 aa).

Disordered regions lie at residues 18 to 105 and 145 to 170; these read HNKT…GQGK and VHRK…LPDS. Residues 50 to 61 are compositionally biased toward polar residues; sequence NSFQSKLWSNTE. Positions 71-85 are enriched in basic residues; the sequence is RPKRNVCTKARRHSC. A compositionally biased stretch (low complexity) spans 93-102; the sequence is QQGSGNNAQG. A coiled-coil region spans residues 207 to 254; sequence TQIQRLEAAGESLQKEIRRKEILLQEKLKKTEEGLRRMQKEKKQAIFQ. 2 disordered regions span residues 264 to 316 and 352 to 379; these read LPRR…LSDY and LGST…EPEL. The segment covering 286-298 has biased composition (basic and acidic residues); it reads FRSEVFSRNRGED. Positions 301-312 are enriched in polar residues; the sequence is CDQAQENPSPRQ. Residues 358–374 show a composition bias toward low complexity; the sequence is ESSRSGTPGSSGSSSST. 2 C2HC/C3H-type zinc fingers span residues 378-407 and 489-518; these read ELAK…MQGS and DYVQ…IKNR. 8 residues coordinate Zn(2+): Cys-382, Cys-385, His-397, Cys-401, Cys-493, Cys-496, His-508, and Cys-512. A disordered region spans residues 507-527; that stretch reads RHIPKCKTIKNRPPPPRRHDS.

It belongs to the ZC2HC1 family. Zn(2+) serves as cofactor.

This Mus musculus (Mouse) protein is Zinc finger C2HC domain-containing protein 1C (Zc2hc1c).